A 324-amino-acid polypeptide reads, in one-letter code: Beta-ketoacyl-[acyl-carrier-protein] synthase III (324 aa).

Active-site residues include C114 and H251. The ACP-binding stretch occupies residues 252–256; the sequence is QANQR. The active site involves N281.

The protein belongs to the thiolase-like superfamily. FabH family. In terms of assembly, homodimer.

The protein localises to the cytoplasm. The enzyme catalyses malonyl-[ACP] + acetyl-CoA + H(+) = 3-oxobutanoyl-[ACP] + CO2 + CoA. The protein operates within lipid metabolism; fatty acid biosynthesis. Catalyzes the condensation reaction of fatty acid synthesis by the addition to an acyl acceptor of two carbons from malonyl-ACP. Catalyzes the first condensation reaction which initiates fatty acid synthesis and may therefore play a role in governing the total rate of fatty acid production. Possesses both acetoacetyl-ACP synthase and acetyl transacylase activities. Its substrate specificity determines the biosynthesis of branched-chain and/or straight-chain of fatty acids. This Rhodospirillum rubrum (strain ATCC 11170 / ATH 1.1.1 / DSM 467 / LMG 4362 / NCIMB 8255 / S1) protein is Beta-ketoacyl-[acyl-carrier-protein] synthase III.